The sequence spans 185 residues: Ribosome-recycling factor (185 aa).

It belongs to the RRF family.

It localises to the cytoplasm. In terms of biological role, responsible for the release of ribosomes from messenger RNA at the termination of protein biosynthesis. May increase the efficiency of translation by recycling ribosomes from one round of translation to another. The sequence is that of Ribosome-recycling factor from Bacillus cereus (strain G9842).